Reading from the N-terminus, the 185-residue chain is MMLIIGLGNPGKEYEHTRHNIGFIALENIAKQYETSFSVKKKFHCEIAESTNNGQKLIFVKPTTYMNLSGKSVIAVKTYYNIPLEKIFVIHDDIDLELGKIKFKTGGGNGGHNGLKSIDGIIENNYHRIRIGVGRPQNSQDVADYVLNNFSKTEYVIAEQAIDKITDNFNLILENKLEEFKSKMV.

Y14 serves as a coordination point for tRNA. The active-site Proton acceptor is H19. Y65, N67, and N113 together coordinate tRNA.

The protein belongs to the PTH family. In terms of assembly, monomer.

The protein resides in the cytoplasm. The enzyme catalyses an N-acyl-L-alpha-aminoacyl-tRNA + H2O = an N-acyl-L-amino acid + a tRNA + H(+). Hydrolyzes ribosome-free peptidyl-tRNAs (with 1 or more amino acids incorporated), which drop off the ribosome during protein synthesis, or as a result of ribosome stalling. Its function is as follows. Catalyzes the release of premature peptidyl moieties from peptidyl-tRNA molecules trapped in stalled 50S ribosomal subunits, and thus maintains levels of free tRNAs and 50S ribosomes. The sequence is that of Peptidyl-tRNA hydrolase from Rickettsia bellii (strain OSU 85-389).